The chain runs to 71 residues: Cytochrome c oxidase subunit 8C, mitochondrial (71 aa).

A mitochondrion-targeting transit peptide spans 1-28; it reads MAHLPRVCPFIRRLRVALLCLRPGHRFA. The Mitochondrial matrix segment spans residues 29–39; the sequence is HSEPQRQRPAS. Residues 40–63 form a helical membrane-spanning segment; it reads ALEMAVGIVVIFSAFLTPSAYVLS. Residues 64–71 lie on the Mitochondrial intermembrane side of the membrane; it reads NLSQFRRE.

Belongs to the cytochrome c oxidase VIII family. In terms of assembly, component of the cytochrome c oxidase (complex IV, CIV), a multisubunit enzyme composed of 14 subunits. The complex is composed of a catalytic core of 3 subunits MT-CO1, MT-CO2 and MT-CO3, encoded in the mitochondrial DNA, and 11 supernumerary subunits COX4I, COX5A, COX5B, COX6A, COX6B, COX6C, COX7A, COX7B, COX7C, COX8 and NDUFA4, which are encoded in the nuclear genome. The complex exists as a monomer or a dimer and forms supercomplexes (SCs) in the inner mitochondrial membrane with NADH-ubiquinone oxidoreductase (complex I, CI) and ubiquinol-cytochrome c oxidoreductase (cytochrome b-c1 complex, complex III, CIII), resulting in different assemblies (supercomplex SCI(1)III(2)IV(1) and megacomplex MCI(2)III(2)IV(2)).

Its subcellular location is the mitochondrion inner membrane. It functions in the pathway energy metabolism; oxidative phosphorylation. Its function is as follows. Component of the cytochrome c oxidase, the last enzyme in the mitochondrial electron transport chain which drives oxidative phosphorylation. The respiratory chain contains 3 multisubunit complexes succinate dehydrogenase (complex II, CII), ubiquinol-cytochrome c oxidoreductase (cytochrome b-c1 complex, complex III, CIII) and cytochrome c oxidase (complex IV, CIV), that cooperate to transfer electrons derived from NADH and succinate to molecular oxygen, creating an electrochemical gradient over the inner membrane that drives transmembrane transport and the ATP synthase. Cytochrome c oxidase is the component of the respiratory chain that catalyzes the reduction of oxygen to water. Electrons originating from reduced cytochrome c in the intermembrane space (IMS) are transferred via the dinuclear copper A center (CU(A)) of subunit 2 and heme A of subunit 1 to the active site in subunit 1, a binuclear center (BNC) formed by heme A3 and copper B (CU(B)). The BNC reduces molecular oxygen to 2 water molecules using 4 electrons from cytochrome c in the IMS and 4 protons from the mitochondrial matrix. This chain is Cytochrome c oxidase subunit 8C, mitochondrial (COX8C), found in Eulemur fulvus fulvus (Brown lemur).